The following is a 637-amino-acid chain: Glutamate--cysteine ligase catalytic subunit (637 aa).

Met1 is subject to N-acetylmethionine. 2 positions are modified to phosphoserine: Ser5 and Ser8.

This sequence belongs to the glutamate--cysteine ligase type 3 family. Heterodimer of a catalytic heavy chain and a regulatory light chain.

It carries out the reaction L-cysteine + L-glutamate + ATP = gamma-L-glutamyl-L-cysteine + ADP + phosphate + H(+). The catalysed reaction is (2S)-2-aminobutanoate + L-glutamate + ATP = gamma-L-glutamyl-(2S)-2-aminobutanoate + ADP + phosphate + H(+). Its pathway is sulfur metabolism; glutathione biosynthesis; glutathione from L-cysteine and L-glutamate: step 1/2. With respect to regulation, feedback inhibition by glutathione. Functionally, catalyzes the ATP-dependent ligation of L-glutamate and L-cysteine and participates in the first and rate-limiting step in glutathione biosynthesis. In Mus musculus (Mouse), this protein is Glutamate--cysteine ligase catalytic subunit.